Reading from the N-terminus, the 253-residue chain is UPF0174 protein jhp_1494 (253 aa).

This sequence belongs to the UPF0174 family.

The sequence is that of UPF0174 protein jhp_1494 from Helicobacter pylori (strain J99 / ATCC 700824) (Campylobacter pylori J99).